Consider the following 952-residue polypeptide: Protein translocase subunit SecA (952 aa).

Residues Q135, 153 to 157, and D575 contribute to the ATP site; that span reads GEGKT. Over residues 907-921 the composition is skewed to low complexity; the sequence is AAPAAAIPGVSAKAA. The segment at 907-946 is disordered; the sequence is AAPAAAIPGVSAKAATQSTTPAAKEIGRNDPCPCGSGKKY. 4 residues coordinate Zn(2+): C938, C940, C949, and C950.

Belongs to the SecA family. In terms of assembly, monomer and homodimer. Part of the essential Sec protein translocation apparatus which comprises SecA, SecYEG and auxiliary proteins SecDF. Other proteins may also be involved. Zn(2+) serves as cofactor.

Its subcellular location is the cell membrane. It is found in the cytoplasm. It catalyses the reaction ATP + H2O + cellular proteinSide 1 = ADP + phosphate + cellular proteinSide 2.. In terms of biological role, part of the Sec protein translocase complex. Interacts with the SecYEG preprotein conducting channel. Has a central role in coupling the hydrolysis of ATP to the transfer of proteins into and across the cell membrane, serving as an ATP-driven molecular motor driving the stepwise translocation of polypeptide chains across the membrane. The polypeptide is Protein translocase subunit SecA (Dehalococcoides mccartyi (strain CBDB1)).